The chain runs to 122 residues: Large ribosomal subunit protein uL14 (122 aa).

It belongs to the universal ribosomal protein uL14 family. As to quaternary structure, part of the 50S ribosomal subunit. Forms a cluster with proteins L3 and L19. In the 70S ribosome, L14 and L19 interact and together make contacts with the 16S rRNA in bridges B5 and B8.

Its function is as follows. Binds to 23S rRNA. Forms part of two intersubunit bridges in the 70S ribosome. In Corynebacterium aurimucosum (strain ATCC 700975 / DSM 44827 / CIP 107346 / CN-1) (Corynebacterium nigricans), this protein is Large ribosomal subunit protein uL14.